The primary structure comprises 1110 residues: MKVPAYAEIGVTTNFSFLEGGSHPQDYVHEASRLGLEAIGIADRNTLAGVVRAYSELGNEDLIHKPRLLIGARLVFADGTPDVLAYPVDRAAYGRLCRLLSVGKLRGAKGECHLAVADLEAFSQGLSLVLMPPYRFQASAIAAALQRLTALESGGVWLGLTPYYRGDDKRRLARLKRVAWAARVPGIATNDVLYHHPERRALQDVLSCVREKTTIDKIGRRLEANAERHLKPAAEMARLFRADPDAIAETLRFAAGISFTLDELKYHYPDEPVPPGKTAQQHLEDLTWEGVAEYFPAGISDKLHATIDKELGIIAHRGYAQYFLTVHDIVRYARSQDILCQGRGSAANSAVCYVLGITCVDPTEIDLLFERFVSEERDEPPDIDVDFEHSRREEVMQYIYRRYGRHRAAIVATVIHYRPRSAIRDVGKALGLSEDVTAALADTVWGSWGKGLNEMQVKQAGLDPHNPLIGRAVELATELIGFPRHLSQHVGGYVLTQDRLDSYVPIGNAAMEGRTFIEWDKDDIDAIKMMKVDVLALGMLTCIRKGFDLIAQHKGVRYALSDIKSEDDNAVYQMLQRGESIGVFQVESRAQMNMLPRLKPKCFYDLVIEVAIVRPGPIQGDMVHPYLRRRNKQEPVVYPAPAGHAGDANELEVILGKTLGVPLFQEQAMRIAIEAAHFTPDEANQLRRAMATFRNVGTIGKFESKMVGNLVARGYDPVFAKNCFEQIKGFGSYGFPESHAASFAKLVYVSAWMKCEHPDAFCCALLNSQPMGFYAPAQIVGDARANEVEVRPVDVSFSDGQCTLEERCGKHHAVRLGFRQIDGFVWADPDEERVRREAGLLPSEDWAARIVAARARGPFNSLERFARLTALPKRALILLADADAFRSLGLDRRAALWAVRRLPDDVPLPLFEAASASEQLDENAAPLPQMPTAEHVVADYQTVRLSLKGHPMEFLRPLFAAERVVTCRSISESRVSGQRMRCAGVVLVRQRPGSAKGVVFITLEDETGIANLVVWPAVMETFRKEVMGARLLWVEGRIQASPEGVVHLVAERLSDRSFEMTRLSDNLAAPRLGELHEPLNDDRREHPDNPAQRIRHPRDVRILPPSRDFH.

The disordered stretch occupies residues 1072–1110; the sequence is LGELHEPLNDDRREHPDNPAQRIRHPRDVRILPPSRDFH. 2 stretches are compositionally biased toward basic and acidic residues: residues 1073–1088 and 1097–1110; these read GELH…EHPD and PRDV…RDFH.

Belongs to the DNA polymerase type-C family. DnaE2 subfamily.

It localises to the cytoplasm. The catalysed reaction is DNA(n) + a 2'-deoxyribonucleoside 5'-triphosphate = DNA(n+1) + diphosphate. In terms of biological role, DNA polymerase involved in damage-induced mutagenesis and translesion synthesis (TLS). It is not the major replicative DNA polymerase. In Rhodopseudomonas palustris (strain BisB5), this protein is Error-prone DNA polymerase.